The chain runs to 350 residues: MRASQSPMLDPRARHLLRTLIARYIRDGEPVGSKTLAQHAGLDVSPATIRNILADLEDIGLLSSPHTSAGRVPTAHGYRVFVDSLVQMQPPGEEEVRRLRAELASSNGTQSLLGSASQMLSAMSHFVGVVSAPRREQFAFRHIDFVPLDARRVLAILVFADNEVQNRVIEPRRAYEPAELERVANYLNAQFAGRALSDIRASLLRELRLAKNEMEQLLAHSVDLASEALVPADDDGMVMAGQTRLMGVQDLSDLDRLRELFEAFASKREILQLLERTIQAPGVRIFIGEETGMVSLDDVSLVTAPYTAGGQVLGVLGVIGPKRMAYDRVIPLVQTAAQMLGAAMEPPGTR.

This sequence belongs to the HrcA family.

Its function is as follows. Negative regulator of class I heat shock genes (grpE-dnaK-dnaJ and groELS operons). Prevents heat-shock induction of these operons. This Xanthomonas campestris pv. campestris (strain ATCC 33913 / DSM 3586 / NCPPB 528 / LMG 568 / P 25) protein is Heat-inducible transcription repressor HrcA.